We begin with the raw amino-acid sequence, 394 residues long: NADH dehydrogenase [ubiquinone] iron-sulfur protein 2 (394 aa).

It belongs to the complex I 49 kDa subunit family. As to quaternary structure, complex I is composed of at least 49 different subunits. This is a component of the iron-sulfur (IP) fragment of the enzyme.

Its subcellular location is the mitochondrion. It carries out the reaction a ubiquinone + NADH + 5 H(+)(in) = a ubiquinol + NAD(+) + 4 H(+)(out). Its function is as follows. Core subunit of the mitochondrial membrane respiratory chain NADH dehydrogenase (Complex I) that is believed to belong to the minimal assembly required for catalysis. Complex I functions in the transfer of electrons from NADH to the respiratory chain. The immediate electron acceptor for the enzyme is believed to be ubiquinone. Component of the iron-sulfur (IP) fragment of the enzyme. The chain is NADH dehydrogenase [ubiquinone] iron-sulfur protein 2 (NAD7) from Arabidopsis thaliana (Mouse-ear cress).